The sequence spans 486 residues: Kynureninase 1 (486 aa).

The segment at 53–72 is disordered; sequence DLKRTTLDPNQEPEHSPTPS. Pyridoxal 5'-phosphate-binding positions include L146, T147, 174–177, S231, D260, H263, and Y285; that span reads FPSD. N6-(pyridoxal phosphate)lysine is present on K286. Residues W326 and N354 each contribute to the pyridoxal 5'-phosphate site.

It belongs to the kynureninase family. In terms of assembly, homodimer. Pyridoxal 5'-phosphate is required as a cofactor.

The protein resides in the cytoplasm. The catalysed reaction is L-kynurenine + H2O = anthranilate + L-alanine + H(+). It carries out the reaction 3-hydroxy-L-kynurenine + H2O = 3-hydroxyanthranilate + L-alanine + H(+). It functions in the pathway amino-acid degradation; L-kynurenine degradation; L-alanine and anthranilate from L-kynurenine: step 1/1. Its pathway is cofactor biosynthesis; NAD(+) biosynthesis; quinolinate from L-kynurenine: step 2/3. Its function is as follows. Catalyzes the cleavage of L-kynurenine (L-Kyn) and L-3-hydroxykynurenine (L-3OHKyn) into anthranilic acid (AA) and 3-hydroxyanthranilic acid (3-OHAA), respectively. This chain is Kynureninase 1 (bna5-1), found in Aspergillus clavatus (strain ATCC 1007 / CBS 513.65 / DSM 816 / NCTC 3887 / NRRL 1 / QM 1276 / 107).